The following is a 273-amino-acid chain: Dermonecrotic toxin LhSicTox-alphaIA1iii (273 aa).

Residue His-5 is part of the active site. Mg(2+) contacts are provided by Glu-25 and Asp-27. The active-site Nucleophile is His-41. Cystine bridges form between Cys-45/Cys-51 and Cys-47/Cys-190. Asp-85 provides a ligand contact to Mg(2+).

This sequence belongs to the arthropod phospholipase D family. Class II subfamily. Requires Mg(2+) as cofactor. As to expression, expressed by the venom gland.

It is found in the secreted. The catalysed reaction is an N-(acyl)-sphingosylphosphocholine = an N-(acyl)-sphingosyl-1,3-cyclic phosphate + choline. The enzyme catalyses an N-(acyl)-sphingosylphosphoethanolamine = an N-(acyl)-sphingosyl-1,3-cyclic phosphate + ethanolamine. It carries out the reaction a 1-acyl-sn-glycero-3-phosphocholine = a 1-acyl-sn-glycero-2,3-cyclic phosphate + choline. It catalyses the reaction a 1-acyl-sn-glycero-3-phosphoethanolamine = a 1-acyl-sn-glycero-2,3-cyclic phosphate + ethanolamine. Its function is as follows. Dermonecrotic toxins cleave the phosphodiester linkage between the phosphate and headgroup of certain phospholipids (sphingolipid and lysolipid substrates), forming an alcohol (often choline) and a cyclic phosphate. This toxin acts on sphingomyelin (SM). It may also act on ceramide phosphoethanolamine (CPE), lysophosphatidylcholine (LPC) and lysophosphatidylethanolamine (LPE), but not on lysophosphatidylserine (LPS), and lysophosphatidylglycerol (LPG). It acts by transphosphatidylation, releasing exclusively cyclic phosphate products as second products. Induces dermonecrosis, hemolysis, increased vascular permeability, edema, inflammatory response, and platelet aggregation. This Loxosceles hirsuta (Recluse spider) protein is Dermonecrotic toxin LhSicTox-alphaIA1iii.